The chain runs to 149 residues: Ribonuclease H (149 aa).

The RNase H type-1 domain maps to 1–142 (MSTITIHTDG…ADELAREGLA (142 aa)). The Mg(2+) site is built by D9, E47, D70, and D134. The tract at residues 124–149 (HAGDPGNERADELAREGLAEARGRQP) is disordered. Basic and acidic residues predominate over residues 129 to 149 (GNERADELAREGLAEARGRQP).

It belongs to the RNase H family. Monomer. It depends on Mg(2+) as a cofactor.

The protein localises to the cytoplasm. It catalyses the reaction Endonucleolytic cleavage to 5'-phosphomonoester.. Functionally, endonuclease that specifically degrades the RNA of RNA-DNA hybrids. The sequence is that of Ribonuclease H from Maricaulis maris (strain MCS10) (Caulobacter maris).